Here is a 157-residue protein sequence, read N- to C-terminus: Probable succinate transporter subunit YjjB (157 aa).

Transmembrane regions (helical) follow at residues 8-28 (LALA…AMVF), 50-70 (MILM…SMLV), 87-107 (VFTV…TAMI), and 129-149 (FLTA…PGLW).

The protein belongs to the ThrE exporter (TC 2.A.79) family. In terms of assembly, the transporter is composed of YjjB and YjjP.

Its subcellular location is the cell inner membrane. In terms of biological role, involved in succinate export with YjjP. Both proteins are required for export. This is Probable succinate transporter subunit YjjB from Escherichia coli O127:H6 (strain E2348/69 / EPEC).